We begin with the raw amino-acid sequence, 631 residues long: MKKYRVNVQGMTCSGCEQHVAVALENMGAKAIEVDFRRGEAVFELPDDVKVEDAKNAIADANYHPGEAEEFQSEQKTNLLKKYRLNVEGMTCTGCEEHIAVALENAGAKGIEVDFRRGEALFELPYDVDIDIAKTAITDAQYQPGEAEEIQVQSEKRTDVSLNDEGNYDYDYIIIGSGGAAFSSAIEAVALNAKVAMIERGTVGGTCVNVGCVPSKTLLRAGEINHLAKNNPFVGLHTSASNVDLAPLVKQKNDLVTEMRNEKYVNLIDDYGFELIKGESKFVNENTVEVNGNQITAKRFLIATGASSTAPNIPGLDEVDYLTSTSLLELKKVPNRLTVIGSGYIGMELGQLFHNLGSEVTLIQRSERLLKEYDPEISEAITKALTEQGINLVTGATYERVEQDGDIKKVHVEINGKKRIIEAEQLLIATGRKPIQTSLNLHAAGVEVGSRGEIVIDDYLKTTNSRIYSAGDVTPGPQFVYVAAYEGGLAARNAIGGLNQKVNLEVVPGVTFTSPSIATVGLTEQQAKEKGYEVKTSVLPLDAVPRALVNRETTGVFKLVADAKTLKVLGAHVVAENAGDVIYAATLAVKFGLTVGDLRETMAPYLTMAEGLKLAVLTFDKDVSKLSCCAG.

2 HMA domains span residues 2–66 (KKYR…YHPG) and 81–145 (KKYR…YQPG). A metal cation-binding residues include Cys13, Cys16, Cys92, and Cys95. The FAD site is built by Ala181, Gly201, and Thr206. An intrachain disulfide couples Cys207 to Cys212. Lys216, Asp472, and Val480 together coordinate FAD. Positions 628 and 629 each coordinate Hg(2+).

Belongs to the class-I pyridine nucleotide-disulfide oxidoreductase family. Homodimer. The cofactor is FAD.

It catalyses the reaction Hg + NADP(+) + H(+) = Hg(2+) + NADPH. Functionally, resistance to Hg(2+) in bacteria appears to be governed by a specialized system which includes mercuric reductase. MerA protein is responsible for volatilizing mercury as Hg(0). The polypeptide is Mercuric reductase (merA) (Bacillus cereus).